An 852-amino-acid polypeptide reads, in one-letter code: Ubiquitin carboxyl-terminal hydrolase 4 (852 aa).

Positions 172–296 (ASGTVLLVDV…WSNAHPDFCV (125 aa)) constitute a Rhodanese domain. The interval 369-393 (RSSSSSSNINERPGSVPPQLSNGST) is disordered. The 362-residue stretch at 488–849 (VGLVNCGNSC…NAYVLFYHRI (362 aa)) folds into the USP domain. Cys-497 serves as the catalytic Nucleophile. Residue His-806 is the Proton acceptor of the active site.

Belongs to the peptidase C19 family.

It is found in the cytoplasm. The protein localises to the late endosome membrane. It catalyses the reaction Thiol-dependent hydrolysis of ester, thioester, amide, peptide and isopeptide bonds formed by the C-terminal Gly of ubiquitin (a 76-residue protein attached to proteins as an intracellular targeting signal).. Its activity is regulated as follows. RFU1 is an inhibitor of deubiquitination activity. In terms of biological role, ubiquitin thioesterase that acts at the late endosome/prevacuolar compartment to recover ubiquitin from ubiquitinated membrane proteins en route to the vacuole. Also removes ubiquitin from soluble proteins targeted to proteasomes. Is essential to maintain a normal level of free ubiquitin. Required for promoting coordination of DNA replication and avoids DNA overreplication. This is Ubiquitin carboxyl-terminal hydrolase 4 (DOA4) from Eremothecium gossypii (strain ATCC 10895 / CBS 109.51 / FGSC 9923 / NRRL Y-1056) (Yeast).